We begin with the raw amino-acid sequence, 225 residues long: Uracil-DNA glycosylase (225 aa).

Catalysis depends on Asp-65, which acts as the Proton acceptor.

Belongs to the uracil-DNA glycosylase (UDG) superfamily. UNG family.

It localises to the cytoplasm. The enzyme catalyses Hydrolyzes single-stranded DNA or mismatched double-stranded DNA and polynucleotides, releasing free uracil.. Functionally, excises uracil residues from the DNA which can arise as a result of misincorporation of dUMP residues by DNA polymerase or due to deamination of cytosine. This Clostridium perfringens (strain SM101 / Type A) protein is Uracil-DNA glycosylase.